A 365-amino-acid polypeptide reads, in one-letter code: Glycosyltransferase 8 domain-containing protein 1 (365 aa).

The Cytoplasmic portion of the chain corresponds to 1–4; it reads MTVR. Residues 5–22 form a helical; Signal-anchor for type II membrane protein membrane-spanning segment; that stretch reads RVNVVILVLLVVAFLIVL. At 23-365 the chain is on the lumenal side; it reads HRNLLNLNDF…HPIRKHVEEK (343 aa). N-linked (GlcNAc...) asparagine glycosylation is found at N102, N181, N245, and N253.

Belongs to the glycosyltransferase 8 family.

It is found in the membrane. This is Glycosyltransferase 8 domain-containing protein 1 (glt8d1) from Danio rerio (Zebrafish).